A 294-amino-acid chain; its full sequence is MTEKKHKNSLSLVHSIKEELKKDKLAMISTIFLVAVFLIVYIYSMFLKQSNYVDVNIMDQYLAPLTTGHLLGTDNGGRDIIMMLMISARNSFNIAFAVTLITLVVGNILGVITGYFGGRFDLIFMRFTDFVMILPSMMIIIVFVTIIPRFNSWSLIGIISIFSWIGTTRLIRARTMTEVNRDYVQASKTSGTSDFKIMFREIWPNLSTLVIAEATLVFAGNIGLETGLSFLGFGLPAGTPSLGTMINEATNPETMTDKPWTWVPATVVILIVVLAIIFIGNALRRVADQRQATR.

The next 6 helical transmembrane spans lie at 27–47 (MISTIFLVAVFLIVYIYSMFL), 94–114 (IAFAVTLITLVVGNILGVITG), 127–147 (FTDFVMILPSMMIIIVFVTII), 151–171 (NSWSLIGIISIFSWIGTTRLI), 202–224 (IWPNLSTLVIAEATLVFAGNIGL), and 260–280 (WTWVPATVVILIVVLAIIFIG). Positions 88-280 (ARNSFNIAFA…IVVLAIIFIG (193 aa)) constitute an ABC transmembrane type-1 domain.

Belongs to the binding-protein-dependent transport system permease family. OppBC subfamily. The complex is composed of two ATP-binding proteins (OppD and OppF), two transmembrane proteins (OppB and OppC) and a solute-binding protein (OppA).

It localises to the cell membrane. Part of the ABC transporter complex OppABCDF involved in the uptake of oligopeptides. Probably responsible for the translocation of the substrate across the membrane. The polypeptide is Oligopeptide transport system permease protein OppC (Lactococcus lactis subsp. cremoris (strain SK11)).